Consider the following 547-residue polypeptide: Membrane transporter D1 (547 aa).

The Cytoplasmic segment spans residues 1–2 (MR). A helical membrane pass occupies residues 3 to 25 (ASVMLCAALGGFLFGYDTGVINA). Over 26 to 43 (ALFQMKDHFGFSEHSWQY) the chain is Extracellular. The chain crosses the membrane as a helical span at residues 44 to 64 (ALIVAIAIAGAFVGAFISGFI). The Cytoplasmic segment spans residues 65-78 (SAAFGRRPCIAVAD). Residues 79–99 (ALFVIGSVLMGAAPNVEVVLV) traverse the membrane as a helical segment. At 100-101 (SR) the chain is on the extracellular side. The helical transmembrane segment at 102–122 (VIVGLAIGISSATIPVYLAEV) threads the bilayer. Residues 123 to 136 (TSPKHRGATIVLNN) lie on the Cytoplasmic side of the membrane. The chain crosses the membrane as a helical span at residues 137–157 (LFLTGGQFVAAGFTAIMVVFT). Topologically, residues 158-164 (SKNIGWR) are extracellular. Residues 165-185 (VAIGIGALPAVVQAFCLLFFL) form a helical membrane-spanning segment. Topologically, residues 186–245 (PESPRWLLSKGHADRAKAVADKFEVDLCEFQEGDELPSVRIDYRPLMARDMRFRVVLSSG) are cytoplasmic. A helical membrane pass occupies residues 246–266 (LQIIQQFSGINTIMYYSSVIL). Residues 267 to 276 (YDAGFRDAIM) are Extracellular-facing. The chain crosses the membrane as a helical span at residues 277–297 (PVVLSIPLAFMNALFTAVAIF). Topologically, residues 298-308 (TVDRFGRRRML) are cytoplasmic. The chain crosses the membrane as a helical span at residues 309–329 (LISVFGCLVLLVVIAIIGFFI). Topologically, residues 330-339 (GTRISYSVGG) are extracellular. A helical transmembrane segment spans residues 340–360 (GLFLALLAVFLALYAPGIGCI). At 361–385 (PWVIMGEIFPTHLRTSAASVATMAN) the chain is on the cytoplasmic side. Residues 386–406 (WGANVLVSQVFPILMGAIGVG) form a helical membrane-spanning segment. G407 is a topological domain (extracellular). Residues 408–428 (TFTIISGLMALGCIFVYFFAV) form a helical membrane-spanning segment. Residues 429–547 (ETKGLTLEQI…AIKAAPHEPK (119 aa)) lie on the Cytoplasmic side of the membrane. Disordered regions lie at residues 449-468 (PPRFHEEGESGESGAGYRED) and 510-547 (VSNKFEERATSSSSDPQSLENQDEVRQAAIKAAPHEPK). Residues 519–529 (TSSSSDPQSLE) show a composition bias toward polar residues.

It belongs to the major facilitator superfamily. Sugar transporter (TC 2.A.1.1) family.

It localises to the membrane. This is Membrane transporter D1 from Leishmania donovani.